The sequence spans 393 residues: Small RNA 2'-O-methyltransferase (393 aa).

S-adenosyl-L-methionine-binding residues include Ser-60, Asp-78, and Ser-114. Residues Glu-132, Glu-135, His-136, and His-181 each contribute to the Mg(2+) site. Positions 283 to 309 (RVSHLPRRKEQDGEQGDKPKDIGGSKA) are disordered. Basic and acidic residues predominate over residues 290 to 305 (RKEQDGEQGDKPKDIG).

It belongs to the methyltransferase superfamily. HEN1 family. The cofactor is Mg(2+).

It localises to the cytoplasm. It catalyses the reaction small RNA 3'-end nucleotide + S-adenosyl-L-methionine = small RNA 3'-end 2'-O-methylnucleotide + S-adenosyl-L-homocysteine + H(+). Functionally, methyltransferase that adds a 2'-O-methyl group at the 3'-end of piRNAs, a class of 24 to 30 nucleotide RNAs that are generated by a Dicer-independent mechanism and are primarily derived from transposons and other repeated sequence elements. This probably protects the 3'-end of piRNAs from uridylation activity and subsequent degradation. Stabilization of piRNAs is essential for gametogenesis. This chain is Small RNA 2'-O-methyltransferase (HENMT1), found in Macaca fascicularis (Crab-eating macaque).